Reading from the N-terminus, the 34-residue chain is Phallacidin proprotein 1 (34 aa).

Positions 1 to 10 (MSDINATRLP) are excised as a propeptide. Residues 11–17 (AWLVDCP) constitute a cross-link (cyclopeptide (Ala-Pro)). Positions 12–16 (WLVDC) form a cross-link, 2'-cysteinyl-6'-hydroxytryptophan sulfoxide (Trp-Cys). Positions 18–34 (CVGDDVNRLLTRGESLC) are excised as a propeptide.

Belongs to the MSDIN fungal toxin family. In terms of processing, processed by the macrocyclase-peptidase enzyme POPB to yield a toxic cyclic heptapeptide. POPB first removes 10 residues from the N-terminus. Conformational trapping of the remaining peptide forces the enzyme to release this intermediate rather than proceed to macrocyclization. The enzyme rebinds the remaining peptide in a different conformation and catalyzes macrocyclization of the N-terminal 7 residues.

Functionally, major toxin that belongs to the bicyclic heptapeptides called phallotoxins. Although structurally related to amatoxins, phallotoxins have a different mode of action, which is the stabilization of F-actin. Phallotoxins are poisonous when administered parenterally, but not orally because of poor absorption. The protein is Phallacidin proprotein 1 of Amanita bisporigera (Destroying angel).